The chain runs to 473 residues: MSEGTLYDKVWDRHTVTKLPTGQDQLFVGLHLVHEVTSPQAFGMLKERDQEVAFPERTHATVDHIVPTGNRDRPYRDEAAENMMAELEANVRGSGIDFSDPDSGNQGIVHVIGPEQGLTQPGMTIVCGDSHTSTHGAFGALAFGIGTSQIRDVLATGCIAMEKQQVRKIEVTGELGEGVTAKDVILTIIGKLGTDGGVGYVYEYAGEAIEDLGMEGRMSICNMSIEGGARAGYVNPDETTYEWLAETDAFADDPEKFERLKPYWESIRSDADAEYDDVVTIDGSAIEPTVTWGTTPGQTAGITEPIPDPDDLPEEDRDTAKRAQKHMRVEPGDTMEGYDIDVAFLGSCTNARLKDLREAAAFVEGREVDDDVRAMVVPGSQRVRDAAEAEGIDEIFIEAGFDWREPGCSMCLGMNDDQLVGDEASASSSNRNFVGRQGSKDGRTVLMSPIMVAAAAVTGEVTDVREMEEVATV.

The disordered stretch occupies residues Thr-289–Thr-319. The segment covering Thr-291 to Gly-301 has biased composition (polar residues). Over residues Pro-307 to Arg-317 the composition is skewed to acidic residues. [4Fe-4S] cluster contacts are provided by Cys-348, Cys-408, and Cys-411.

The protein belongs to the aconitase/IPM isomerase family. LeuC type 1 subfamily. In terms of assembly, heterodimer of LeuC and LeuD. [4Fe-4S] cluster is required as a cofactor.

The enzyme catalyses (2R,3S)-3-isopropylmalate = (2S)-2-isopropylmalate. The protein operates within amino-acid biosynthesis; L-leucine biosynthesis; L-leucine from 3-methyl-2-oxobutanoate: step 2/4. Catalyzes the isomerization between 2-isopropylmalate and 3-isopropylmalate, via the formation of 2-isopropylmaleate. The polypeptide is 3-isopropylmalate dehydratase large subunit (Halorubrum lacusprofundi (strain ATCC 49239 / DSM 5036 / JCM 8891 / ACAM 34)).